The following is a 183-amino-acid chain: Hypoxanthine/guanine phosphoribosyltransferase (183 aa).

It belongs to the purine/pyrimidine phosphoribosyltransferase family. Archaeal HPRT subfamily. Homodimer.

It is found in the cytoplasm. The catalysed reaction is IMP + diphosphate = hypoxanthine + 5-phospho-alpha-D-ribose 1-diphosphate. It carries out the reaction GMP + diphosphate = guanine + 5-phospho-alpha-D-ribose 1-diphosphate. It functions in the pathway purine metabolism; IMP biosynthesis via salvage pathway; IMP from hypoxanthine: step 1/1. Functionally, catalyzes a salvage reaction resulting in the formation of IMP that is energically less costly than de novo synthesis. This Methanocaldococcus jannaschii (strain ATCC 43067 / DSM 2661 / JAL-1 / JCM 10045 / NBRC 100440) (Methanococcus jannaschii) protein is Hypoxanthine/guanine phosphoribosyltransferase.